Here is a 1012-residue protein sequence, read N- to C-terminus: Multiple C2 domain and transmembrane region protein 10 (1012 aa).

The C2 1 domain occupies 1–115; it reads MTEAKTGTGN…REGESVVQLY (115 aa). Residues 141-203 form a disordered region; that stretch reads ENGENVRRVN…SQQNGQGQRM (63 aa). Basic residues predominate over residues 148-160; the sequence is RVNRSGGSKKSKK. 2 stretches are compositionally biased toward low complexity: residues 161-180 and 188-202; these read VQNV…QQQQ and RGNQ…QGQR. 3 C2 domains span residues 262–376, 411–551, and 585–710; these read SSHK…PQWY, KAGN…SRWF, and YNSD…THSY. Residues glutamate 296, glutamate 344, asparagine 346, and glutamate 349 each contribute to the Ca(2+) site. 3 consecutive transmembrane segments (helical) span residues 810-830, 841-861, and 952-972; these read FFRL…VEVM, VFVL…PCLL, and ATFL…TVPV.

This sequence belongs to the MCTP family. Ca(2+) is required as a cofactor. In terms of tissue distribution, highly expressed in roots meristems, shoot apical meristems (SAMs) and in incipient leaf primordia. Observed in flowers.

Its subcellular location is the endoplasmic reticulum membrane. May function as a signaling molecule by regulating the trafficking of other regulators. The chain is Multiple C2 domain and transmembrane region protein 10 from Arabidopsis thaliana (Mouse-ear cress).